The following is a 399-amino-acid chain: Probable 2,3-bisphosphoglycerate-independent phosphoglycerate mutase (399 aa).

This sequence belongs to the BPG-independent phosphoglycerate mutase family. A-PGAM subfamily.

It catalyses the reaction (2R)-2-phosphoglycerate = (2R)-3-phosphoglycerate. The protein operates within carbohydrate degradation; glycolysis; pyruvate from D-glyceraldehyde 3-phosphate: step 3/5. Functionally, catalyzes the interconversion of 2-phosphoglycerate and 3-phosphoglycerate. This is Probable 2,3-bisphosphoglycerate-independent phosphoglycerate mutase from Geobacter sulfurreducens (strain ATCC 51573 / DSM 12127 / PCA).